Reading from the N-terminus, the 221-residue chain is MGICMSMYTQVLVPVDADGDHHILWSRFYERWGSCFNPCAGLVNCLPPHSSALYLCHRMEARSRAPRRQLCPPGITWLALAYLLSCLLASSKAKVFSRCELAKEMHDFGLDGYRGYNLADWVCLAYYTSGFNTNAVDHEADGSTNNGIFQISSRRWCRTLASNGPNLCRIYCTDLLNNDLKDSIVCAMKIVQEPLGLGYWEAWRHHCQGRDLSDWVDGCDF.

Residues 1-69 (MGICMSMYTQ…EARSRAPRRQ (69 aa)) are Cytoplasmic-facing. Residues 70–90 (LCPPGITWLALAYLLSCLLAS) traverse the membrane as a helical; Signal-anchor for type II membrane protein segment. Residues 91 to 221 (SKAKVFSRCE…LSDWVDGCDF (131 aa)) are Extracellular-facing. Positions 94 to 221 (KVFSRCELAK…LSDWVDGCDF (128 aa)) constitute a C-type lysozyme domain. 4 disulfides stabilise this stretch: Cys99–Cys219, Cys123–Cys207, Cys157–Cys172, and Cys168–Cys186.

Belongs to the glycosyl hydrolase 22 family. In terms of assembly, interacts with ASTL. In terms of tissue distribution, the processed form is expressed in sperm (at protein level). Expressed strongly in testis and epididymis and weakly in pancreas.

The protein resides in the cytoplasmic vesicle. It is found in the secretory vesicle. It localises to the acrosome membrane. The protein localises to the secreted. In terms of biological role, sperm surface membrane protein that may be involved in sperm-egg plasma membrane adhesion and fusion during fertilization. It could be a potential receptor for the egg oligosaccharide residue N-acetylglucosamine, which is present in the extracellular matrix over the egg plasma membrane. The processed form has no detectable bacteriolytic activity in vitro. The chain is Sperm acrosome membrane-associated protein 3 (Spaca3) from Mus musculus (Mouse).